Here is a 469-residue protein sequence, read N- to C-terminus: MSDLENKIATDIESYLKEHENKQLLRFITCGSVDDGKSTLIGRLLHDSKMIFEDQLAAIKKDSKKVGTTEGEFDLALLVDGLQSEREQGITIDVAYRYFTTDKRKFIIADTPGHEQYTRNMATGASTADLAIILIDARYGVQTQTRRHSFITKLLGIKHIVVAVNKMDLVDFKEDIFNQISSDYLKFAQELGMTKDITLIPISALNGDNIVKRSEKSPWYKGDTLMNLLETIKIDEDRDLVHFRFPVQYVNRPNLNFRGFCGTIASGVIKVGDAITVLPSGKSSTVKEIVTYDGNLDYAYSQQAITLTLNDEIDISRGDIIVKSDEQPDHASNLDVDIVWMSEEPLIKGKQYFIKRATTVTVGSIDHFYYKTDVNTLEQSEANVLNLNEISRAKLDLEQVIAFDSYDKNKVMGSFIIIDRITNNTVGAGMIRNKSEDQSKKDSIYSDFEIEFNALVRKHFPHWECKEIF.

One can recognise a tr-type G domain in the interval 22–238 (KQLLRFITCG…LETIKIDEDR (217 aa)). The segment at 31–38 (GSVDDGKS) is G1. 31 to 38 (GSVDDGKS) contributes to the GTP binding site. The interval 89–93 (GITID) is G2. Residues 110–113 (DTPG) are G3. Residues 110–114 (DTPGH) and 165–168 (NKMD) each bind GTP. Residues 165–168 (NKMD) are G4. Residues 203-205 (SAL) form a G5 region.

This sequence belongs to the TRAFAC class translation factor GTPase superfamily. Classic translation factor GTPase family. CysN/NodQ subfamily. As to quaternary structure, heterodimer composed of CysD, the smaller subunit, and CysN.

The catalysed reaction is sulfate + ATP + H(+) = adenosine 5'-phosphosulfate + diphosphate. It functions in the pathway sulfur metabolism; hydrogen sulfide biosynthesis; sulfite from sulfate: step 1/3. Functionally, with CysD forms the ATP sulfurylase (ATPS) that catalyzes the adenylation of sulfate producing adenosine 5'-phosphosulfate (APS) and diphosphate, the first enzymatic step in sulfur assimilation pathway. APS synthesis involves the formation of a high-energy phosphoric-sulfuric acid anhydride bond driven by GTP hydrolysis by CysN coupled to ATP hydrolysis by CysD. This chain is Sulfate adenylyltransferase subunit 1, found in Aliarcobacter butzleri (strain RM4018) (Arcobacter butzleri).